The primary structure comprises 876 residues: Protein argonaute 17 (876 aa).

Residues proline 246 to glutamate 338 enclose the PAZ domain. One can recognise a Piwi domain in the interval leucine 514–lysine 834. A disordered region spans residues glycine 839 to threonine 859.

It belongs to the argonaute family. Ago subfamily.

Functionally, probably involved in the RNA silencing pathway. May bind to short RNAs such as microRNAs (miRNAs) or short interfering RNAs (siRNAs), and represses the translation of mRNAs which are complementary to them. This is Protein argonaute 17 (AGO17) from Oryza sativa subsp. japonica (Rice).